We begin with the raw amino-acid sequence, 750 residues long: Phosphate transporter PHO1 homolog 7 (750 aa).

One can recognise an SPX domain in the interval 1 to 298 (MKFGKDFVRQ…SRSAAKPYME (298 aa)). Over 1–350 (MKFGKDFVRQ…KVKKEKHRIT (350 aa)) the chain is Cytoplasmic. The chain crosses the membrane as a helical span at residues 351–371 (FSTGFFVGCTVSLVVALVMFI). Residues 372–391 (HARNIMGAVGHKVYMETMFP) lie on the Extracellular side of the membrane. The helical transmembrane segment at 392-412 (LYSLFAFVVLHMIMYASNIYF) threads the bilayer. Over 413-435 (WKRYRVNYPFIFGFKEGTELGYR) the chain is Cytoplasmic. A helical transmembrane segment spans residues 436–456 (HVLLLSFGLGTLALCAVLINL). The Extracellular portion of the chain corresponds to 457–472 (DMEMDPNTNDYKTMTE). A helical transmembrane segment spans residues 473 to 493 (LLPMFILALVVAILFCPFNIF). Over 494–622 (YRSSRVFFLM…YSFNRGNIWK (129 aa)) the chain is Cytoplasmic. The EXS domain occupies 557–750 (RSSDVYSTFY…NYNEEEDRDS (194 aa)). A helical membrane pass occupies residues 623–643 (ISAWVFSALATFYGTYWDIVF). The Extracellular segment spans residues 644 to 666 (DWGLLHRPSKHLLREKLLVPHKA). Residues 667 to 687 (VYYVAIVLNIVLRMAWLQTVL) traverse the membrane as a helical segment. Over 688–750 (DFNLSFLHRE…NYNEEEDRDS (63 aa)) the chain is Cytoplasmic.

It belongs to the SYG1 (TC 2.A.94) family. Expressed in root tips, vascular cylinders of roots and filaments, leaf hydathodes, stem, receptacle and stigma apex.

It is found in the cell membrane. In terms of biological role, may transport inorganic phosphate (Pi). This is Phosphate transporter PHO1 homolog 7 (PHO1-H7) from Arabidopsis thaliana (Mouse-ear cress).